The following is a 300-amino-acid chain: ClpXP adapter protein SpxH (300 aa).

It belongs to the SpxH family. In terms of assembly, interacts with Spx.

Its subcellular location is the cytoplasm. Adapter protein required for efficient degradation of Spx by ClpXP under non-stress conditions. Interaction with Spx stabilizes Spx and exposes the C-terminus of Spx for recognition and proteolysis by ClpXP. The sequence is that of ClpXP adapter protein SpxH from Shouchella clausii (strain KSM-K16) (Alkalihalobacillus clausii).